A 295-amino-acid chain; its full sequence is Shikimate dehydrogenase (NADP(+)) (295 aa).

Shikimate contacts are provided by residues 22–24 and Ser-69; that span reads SLS. Lys-73 (proton acceptor) is an active-site residue. Asn-94 and Asp-111 together coordinate shikimate. Residues 135–139 and Val-236 each bind NADP(+); that span reads GAGGA. Position 238 (Tyr-238) interacts with shikimate. Gly-260 is an NADP(+) binding site.

It belongs to the shikimate dehydrogenase family. As to quaternary structure, homodimer.

It catalyses the reaction shikimate + NADP(+) = 3-dehydroshikimate + NADPH + H(+). Its pathway is metabolic intermediate biosynthesis; chorismate biosynthesis; chorismate from D-erythrose 4-phosphate and phosphoenolpyruvate: step 4/7. In terms of biological role, involved in the biosynthesis of the chorismate, which leads to the biosynthesis of aromatic amino acids. Catalyzes the reversible NADPH linked reduction of 3-dehydroshikimate (DHSA) to yield shikimate (SA). The sequence is that of Shikimate dehydrogenase (NADP(+)) from Streptococcus uberis (strain ATCC BAA-854 / 0140J).